We begin with the raw amino-acid sequence, 1046 residues long: Piwi-like protein 2 (1046 aa).

Residues 1–12 (MDPKRPTFPSPP) are compositionally biased toward pro residues. The interval 1–35 (MDPKRPTFPSPPGVIRAPWQQSTEDQSQLLDQPSL) is disordered. A compositionally biased stretch (polar residues) spans 19-31 (WQQSTEDQSQLLD). The 114-residue stretch at 462 to 575 (SVLDVMNLIY…LLPELSFMTG (114 aa)) folds into the PAZ domain. The 292-residue stretch at 741–1032 (LVVCIMTGNR…LAFLSGQYLH (292 aa)) folds into the Piwi domain. Active-site residues include Asp818, Glu856, Asp888, and His1021.

It belongs to the argonaute family. Piwi subfamily. In terms of assembly, component of the PET complex. It depends on Mg(2+) as a cofactor. In terms of processing, methylated on arginine residues; required for the interaction with Tudor domain-containing protein and subsequent localization to the meiotic nuage, also named P granule. Detected in primordial germ cells (PGCs) from 3 dpf. In adult, it is found in both the female and male gonad. In the ovary, it is present in all stages of germ cell differentiation. In testis, it is present in mitotic and meiotic germ cells. No protein has been detected in the fully differentiated sperm cell.

The protein localises to the cytoplasm. The protein resides in the nucleus. Its function is as follows. Endoribonuclease that plays a central role during spermatogenesis by repressing transposable elements and preventing their mobilization, which is essential for the germline integrity. Plays an essential role in germ cell differentiation and meiosis, independently of the function in transposable elements repression. Acts via the piRNA metabolic process, which mediates the repression of transposable elements during meiosis by forming complexes composed of piRNAs and Piwi proteins and govern the methylation and subsequent repression of transposons. During piRNA biosynthesis, plays a key role in the piRNA amplification loop, also named ping-pong amplification cycle, by acting as a 'slicer-competent' piRNA endoribonuclease that cleaves primary piRNAs, which are then loaded onto 'slicer-incompetent' piwil4. Piwil2 slicing produces a pre-miRNA intermediate, which is then processed in mature piRNAs, and as well as a 16 nucleotide by-product that is degraded. Required for piwil4/miwi2 nuclear localization and association with secondary piRNAs antisense. Represses circadian rhythms by promoting the stability and activity of core clock components BMAL1 and CLOCK. This chain is Piwi-like protein 2 (piwil2), found in Danio rerio (Zebrafish).